We begin with the raw amino-acid sequence, 450 residues long: Folate synthesis bifunctional protein (450 aa).

The tract at residues 1 to 166 (MTTWNFVCLG…TFAELAAIYP (166 aa)) is HPPK. Positions 180-441 (TQIMGIVNVT…QVEGNRRVLA (262 aa)) constitute a Pterin-binding domain. Positions 182–450 (IMGIVNVTDD…AAAAWSGMPV (269 aa)) are DHPS. N187 is a Mg(2+) binding site. Residues T227, D267, N287, D358, K395, and 429 to 431 (RVH) each bind (7,8-dihydropterin-6-yl)methyl diphosphate.

The protein in the C-terminal section; belongs to the DHPS family. It in the N-terminal section; belongs to the HPPK family. The cofactor is Mg(2+).

It catalyses the reaction 6-hydroxymethyl-7,8-dihydropterin + ATP = (7,8-dihydropterin-6-yl)methyl diphosphate + AMP + H(+). It carries out the reaction (7,8-dihydropterin-6-yl)methyl diphosphate + 4-aminobenzoate = 7,8-dihydropteroate + diphosphate. It participates in cofactor biosynthesis; tetrahydrofolate biosynthesis; 2-amino-4-hydroxy-6-hydroxymethyl-7,8-dihydropteridine diphosphate from 7,8-dihydroneopterin triphosphate: step 4/4. It functions in the pathway cofactor biosynthesis; tetrahydrofolate biosynthesis; 7,8-dihydrofolate from 2-amino-4-hydroxy-6-hydroxymethyl-7,8-dihydropteridine diphosphate and 4-aminobenzoate: step 1/2. The chain is Folate synthesis bifunctional protein (folKP) from Chlamydia muridarum (strain MoPn / Nigg).